The chain runs to 360 residues: Tryptophan--tRNA ligase, mitochondrial (360 aa).

Residues 1–18 (MALHSMRKARERWSFIRA) constitute a mitochondrion transit peptide. Residues Gln42 and 48–51 (HLGN) each bind ATP. L-tryptophan is bound at residue Asp167. Residues 179-181 (GED), Val217, and 226-230 (KMSKS) contribute to the ATP site.

It belongs to the class-I aminoacyl-tRNA synthetase family. In terms of tissue distribution, brain.

The protein resides in the mitochondrion matrix. Its subcellular location is the mitochondrion. It carries out the reaction tRNA(Trp) + L-tryptophan + ATP = L-tryptophyl-tRNA(Trp) + AMP + diphosphate + H(+). Functionally, catalyzes the attachment of tryptophan to tRNA(Trp) in a two-step reaction: tryptophan is first activated by ATP to form Trp-AMP and then transferred to the acceptor end of tRNA(Trp). The sequence is that of Tryptophan--tRNA ligase, mitochondrial (WARS2) from Homo sapiens (Human).